Here is a 163-residue protein sequence, read N- to C-terminus: Large ribosomal subunit protein uL10 (163 aa).

Belongs to the universal ribosomal protein uL10 family. Part of the ribosomal stalk of the 50S ribosomal subunit. The N-terminus interacts with L11 and the large rRNA to form the base of the stalk. The C-terminus forms an elongated spine to which L12 dimers bind in a sequential fashion forming a multimeric L10(L12)X complex.

In terms of biological role, forms part of the ribosomal stalk, playing a central role in the interaction of the ribosome with GTP-bound translation factors. The protein is Large ribosomal subunit protein uL10 of Actinobacillus succinogenes (strain ATCC 55618 / DSM 22257 / CCUG 43843 / 130Z).